We begin with the raw amino-acid sequence, 248 residues long: Exosome complex component Rrp41 (248 aa).

The protein belongs to the RNase PH family. Rrp41 subfamily. Component of the archaeal exosome complex. Forms a hexameric ring-like arrangement composed of 3 Rrp41-Rrp42 heterodimers. The hexameric ring associates with a trimer of Rrp4 and/or Csl4 subunits.

It localises to the cytoplasm. Its function is as follows. Catalytic component of the exosome, which is a complex involved in RNA degradation. Has 3'-&gt;5' exoribonuclease activity. Can also synthesize heteromeric RNA-tails. The protein is Exosome complex component Rrp41 of Thermoplasma acidophilum (strain ATCC 25905 / DSM 1728 / JCM 9062 / NBRC 15155 / AMRC-C165).